The following is a 625-amino-acid chain: Acetolactate synthase (625 aa).

The interval 1-29 (MSAPTKPHARPQGAGNSVPNTVKPATQFP) is disordered. Polar residues predominate over residues 14 to 29 (AGNSVPNTVKPATQFP). Residue Glu-92 coordinates thiamine diphosphate. FAD contacts are provided by residues Arg-194, 300–321 (HGTVAAVAALQRSDLLIALGTR), and 343–362 (DIDPAEIGKNRHADVPIVGD). Residues 436–516 (QHQMWAAQFI…IKVALINNGN (81 aa)) are thiamine pyrophosphate binding. Residues Asp-487 and Asn-514 each contribute to the Mg(2+) site.

This sequence belongs to the TPP enzyme family. Mg(2+) serves as cofactor. Thiamine diphosphate is required as a cofactor.

It carries out the reaction 2 pyruvate + H(+) = (2S)-2-acetolactate + CO2. It participates in amino-acid biosynthesis; L-isoleucine biosynthesis; L-isoleucine from 2-oxobutanoate: step 1/4. The protein operates within amino-acid biosynthesis; L-valine biosynthesis; L-valine from pyruvate: step 1/4. The polypeptide is Acetolactate synthase (ilvB) (Mycobacterium leprae (strain TN)).